The primary structure comprises 641 residues: uncharacterized protein (641 aa).

Phosphoserine is present on Ser-112. Disordered stretches follow at residues 118 to 243 (STSI…LDPT), 261 to 289 (KSPR…TVSI), 355 to 386 (DKSD…RLEA), and 404 to 430 (DGEG…QSHS). The segment covering 132 to 162 (ASVSSQYPHRTFQKQVNKTCVSKSDGPSGNG) has biased composition (polar residues). Ser-198 carries the phosphoserine modification. Polar residues-rich tracts occupy residues 222–234 (NQEL…SRSN) and 278–289 (RQASSAGDTVSI). The span at 355–368 (DKSDGDQREEDCVR) shows a compositional bias: basic and acidic residues. Composition is skewed to low complexity over residues 374–383 (RSSSPTSPTR) and 421–430 (SSSAAVQSHS).

This is an uncharacterized protein from Mus musculus (Mouse).